We begin with the raw amino-acid sequence, 514 residues long: UDP-N-acetylmuramate--L-alanine ligase (514 aa).

127 to 133 serves as a coordination point for ATP; the sequence is GTHGKTT. Low complexity predominate over residues 495 to 505; the sequence is IGGTIPDIPGG. A disordered region spans residues 495 to 514; the sequence is IGGTIPDIPGGSTPDASAAG.

Belongs to the MurCDEF family.

The protein localises to the cytoplasm. The enzyme catalyses UDP-N-acetyl-alpha-D-muramate + L-alanine + ATP = UDP-N-acetyl-alpha-D-muramoyl-L-alanine + ADP + phosphate + H(+). It functions in the pathway cell wall biogenesis; peptidoglycan biosynthesis. Its function is as follows. Cell wall formation. The chain is UDP-N-acetylmuramate--L-alanine ligase from Salinispora tropica (strain ATCC BAA-916 / DSM 44818 / JCM 13857 / NBRC 105044 / CNB-440).